The chain runs to 398 residues: Succinate--CoA ligase [ADP-forming] subunit beta (398 aa).

The 246-residue stretch at 9–254 (KRLLHEYGAP…TSEEDPKEIE (246 aa)) folds into the ATP-grasp domain. Residues Lys-46, 53-55 (GRG), Glu-109, Ala-112, and Glu-117 contribute to the ATP site. Asn-209 and Asp-223 together coordinate Mg(2+). Residues Asn-274 and 331–333 (GIM) contribute to the substrate site.

It belongs to the succinate/malate CoA ligase beta subunit family. Heterotetramer of two alpha and two beta subunits. The cofactor is Mg(2+).

The catalysed reaction is succinate + ATP + CoA = succinyl-CoA + ADP + phosphate. The enzyme catalyses GTP + succinate + CoA = succinyl-CoA + GDP + phosphate. The protein operates within carbohydrate metabolism; tricarboxylic acid cycle; succinate from succinyl-CoA (ligase route): step 1/1. Succinyl-CoA synthetase functions in the citric acid cycle (TCA), coupling the hydrolysis of succinyl-CoA to the synthesis of either ATP or GTP and thus represents the only step of substrate-level phosphorylation in the TCA. The beta subunit provides nucleotide specificity of the enzyme and binds the substrate succinate, while the binding sites for coenzyme A and phosphate are found in the alpha subunit. This Bartonella henselae (strain ATCC 49882 / DSM 28221 / CCUG 30454 / Houston 1) (Rochalimaea henselae) protein is Succinate--CoA ligase [ADP-forming] subunit beta.